The chain runs to 86 residues: Mu-theraphotoxin-Cg2a 2 (86 aa).

A signal peptide spans 1–21 (MKVSVVITLAVLGVMFVWASA). A propeptide spanning residues 22-50 (AELEERGSDQRDSPAWIKSMERIFQSEER) is cleaved from the precursor. 3 disulfides stabilise this stretch: Cys-52–Cys-66, Cys-59–Cys-71, and Cys-65–Cys-78. At Phe-84 the chain carries Phenylalanine amide.

Belongs to the neurotoxin 10 (Hwtx-1) family. 37 (Jztx-31) subfamily. As to expression, expressed by the venom gland.

The protein resides in the secreted. Inhibits both peak current and fast inactivation of voltage-gated sodium channels (Nav) channels. Inhibits the inactivation of Nav on DRG neurons (EC(50)=1.77 uM) and peak current of cardiac myocytes (IC(50)=0.90 uM). The protein is Mu-theraphotoxin-Cg2a 2 of Chilobrachys guangxiensis (Chinese earth tiger tarantula).